The sequence spans 89 residues: Small ribosomal subunit protein uS14A (89 aa).

Belongs to the universal ribosomal protein uS14 family. In terms of assembly, part of the 30S ribosomal subunit. Contacts proteins S3 and S10.

Functionally, binds 16S rRNA, required for the assembly of 30S particles and may also be responsible for determining the conformation of the 16S rRNA at the A site. This Lactiplantibacillus plantarum (strain ATCC BAA-793 / NCIMB 8826 / WCFS1) (Lactobacillus plantarum) protein is Small ribosomal subunit protein uS14A.